A 306-amino-acid chain; its full sequence is MGGARDVGWVAAGLVLGAGACYCIYRLTRGPRRGGRRLRPSRSAEDLTEGSYDAILSAEQLEKLLYLLESTDDPIITEKALVTLGNNAAFSTNQAIIRELGGIPIVGSKINSLNQSIKEKALNALNNLSVNVENQTKIKIYVRQVCEDVFADPLNSAVQLAALRLLTNMTVTNDYQHLLSNYITGLLHLLLIGNGSTKVQVLKLLLNLSENPAMTEGLLSAQVDSSFLSLYDGQMANEILLRALTLFQNINNCLRVEGRLANQLPFAKGSLFFLLYGEECAQKMKALACHPDVDVKEKALAIKPKF.

A helical membrane pass occupies residues 7–29 (VGWVAAGLVLGAGACYCIYRLTR). Position 43 is a phosphoserine (Ser43). Thr48 carries the post-translational modification Phosphothreonine. One copy of the ARM repeat lies at 101-143 (GGIPIVGSKINSLNQSIKEKALNALNNLSVNVENQTKIKIYVR).

In terms of assembly, interacts with the DNA-binding domain of p53/TP53.

It localises to the endoplasmic reticulum membrane. Its subcellular location is the mitochondrion outer membrane. May play a role in cell survival and cell growth. May suppress the transcriptional activity of p53/TP53. In Rattus norvegicus (Rat), this protein is Armadillo repeat-containing protein 10 (Armc10).